The sequence spans 74 residues: ATP synthase subunit c (74 aa).

The next 2 membrane-spanning stretches (helical) occupy residues 8–28 (FIGIGLMAIGMYGAALGVSNI) and 52–72 (IGAGLAEAMGLFSFVIAMLLI).

The protein belongs to the ATPase C chain family. F-type ATPases have 2 components, F(1) - the catalytic core - and F(0) - the membrane proton channel. F(1) has five subunits: alpha(3), beta(3), gamma(1), delta(1), epsilon(1). F(0) has three main subunits: a(1), b(2) and c(10-14). The alpha and beta chains form an alternating ring which encloses part of the gamma chain. F(1) is attached to F(0) by a central stalk formed by the gamma and epsilon chains, while a peripheral stalk is formed by the delta and b chains.

The protein resides in the cell inner membrane. Its function is as follows. F(1)F(0) ATP synthase produces ATP from ADP in the presence of a proton or sodium gradient. F-type ATPases consist of two structural domains, F(1) containing the extramembraneous catalytic core and F(0) containing the membrane proton channel, linked together by a central stalk and a peripheral stalk. During catalysis, ATP synthesis in the catalytic domain of F(1) is coupled via a rotary mechanism of the central stalk subunits to proton translocation. Functionally, key component of the F(0) channel; it plays a direct role in translocation across the membrane. A homomeric c-ring of between 10-14 subunits forms the central stalk rotor element with the F(1) delta and epsilon subunits. This is ATP synthase subunit c from Rickettsia felis (strain ATCC VR-1525 / URRWXCal2) (Rickettsia azadi).